Reading from the N-terminus, the 505-residue chain is Glutamate--tRNA ligase (505 aa).

The 'HIGH' region signature appears at 12 to 22 (PSPTGDPHVGT). The 'KMSKS' region motif lies at 253-257 (KLSKR). Lysine 256 provides a ligand contact to ATP.

Belongs to the class-I aminoacyl-tRNA synthetase family. Glutamate--tRNA ligase type 1 subfamily. Monomer.

Its subcellular location is the cytoplasm. It catalyses the reaction tRNA(Glu) + L-glutamate + ATP = L-glutamyl-tRNA(Glu) + AMP + diphosphate. In terms of biological role, catalyzes the attachment of glutamate to tRNA(Glu) in a two-step reaction: glutamate is first activated by ATP to form Glu-AMP and then transferred to the acceptor end of tRNA(Glu). In Chlamydophila psittaci (strain ATCC VR-125 / 6BC) (Chlamydia psittaci), this protein is Glutamate--tRNA ligase.